The chain runs to 170 residues: Ribosome maturation factor RimM (170 aa).

One can recognise a PRC barrel domain in the interval 95–168 (EDAYYYHEIV…IIKVQLMEGM (74 aa)).

This sequence belongs to the RimM family. As to quaternary structure, binds ribosomal protein uS19.

It is found in the cytoplasm. Functionally, an accessory protein needed during the final step in the assembly of 30S ribosomal subunit, possibly for assembly of the head region. Essential for efficient processing of 16S rRNA. May be needed both before and after RbfA during the maturation of 16S rRNA. It has affinity for free ribosomal 30S subunits but not for 70S ribosomes. This is Ribosome maturation factor RimM from Oceanobacillus iheyensis (strain DSM 14371 / CIP 107618 / JCM 11309 / KCTC 3954 / HTE831).